The following is a 162-amino-acid chain: ATP synthase subunit b (162 aa).

The helical transmembrane segment at 6–28 threads the bilayer; sequence LVTFVLTIVNILVLFYLLKRFLF.

It belongs to the ATPase B chain family. As to quaternary structure, F-type ATPases have 2 components, F(1) - the catalytic core - and F(0) - the membrane proton channel. F(1) has five subunits: alpha(3), beta(3), gamma(1), delta(1), epsilon(1). F(0) has three main subunits: a(1), b(2) and c(10-14). The alpha and beta chains form an alternating ring which encloses part of the gamma chain. F(1) is attached to F(0) by a central stalk formed by the gamma and epsilon chains, while a peripheral stalk is formed by the delta and b chains.

The protein localises to the cell membrane. Functionally, f(1)F(0) ATP synthase produces ATP from ADP in the presence of a proton or sodium gradient. F-type ATPases consist of two structural domains, F(1) containing the extramembraneous catalytic core and F(0) containing the membrane proton channel, linked together by a central stalk and a peripheral stalk. During catalysis, ATP synthesis in the catalytic domain of F(1) is coupled via a rotary mechanism of the central stalk subunits to proton translocation. In terms of biological role, component of the F(0) channel, it forms part of the peripheral stalk, linking F(1) to F(0). In Natranaerobius thermophilus (strain ATCC BAA-1301 / DSM 18059 / JW/NM-WN-LF), this protein is ATP synthase subunit b.